Reading from the N-terminus, the 213-residue chain is MEKMRVVLITLLLFIGAAVAEKAGNGKAANNPAEDASDGEHNLVEEAGGIGDAITPAEGKALISAYESARFKKFVTHCSSHVAQTCSGNDPLHASGRCHGINVPLGLSFCLFDSMEKCLGDHEAKLIDPNPGPMSAIPNSIQSQQLLIETVKFRTVLKTCTRVSAKFCLSAPNVDTSVLPACLGPSLNQCVYPAADAFTPGPPLELPPIIIMN.

Positions 1–20 (MEKMRVVLITLLLFIGAAVA) are cleaved as a signal peptide.

This sequence belongs to the nodulin 20 family.

In Glycine max (Soybean), this protein is Nodulin-27.